A 627-amino-acid chain; its full sequence is MSVQSNKNLSESAQVDQQSIQPFPRSQKIYVQGSRPDIRVPMREISLDVTPTDFGGEINAPVTVYDTSGPYTDPNVTIDVRKGLADVRSAWIEDRGDTEKLPGLTSEFGQRRLNDAELSAMRFAHVRNPRRAKAEHNVSQMHYAKKGIITPEMEYVAIRENMKLAEAREAGLLVEQHAGQSFGAAIPKEITPEFVRSEVARGRAIIPANINHTELEPMIIGRNFLVKINGNIGNSALGSSIEEEVAKLTWGIRWGSDTVMDLSTGKHIHETREWIIRNSPVPIGTVPIYQALEKVNGVAEDLTWELFRDTLIEQAEQGVDYFTIHAGVLLRYVPLTAKRVTGIVSRGGSIMAKWCLAHHKENFLYTHFEEICEIMKAYDVSFSLGDGLRPGSIADANDAAQFGELETLGELTKIAWKHDVQCMIEGPGHVPMHMIKENMDKQLECCDEAPFYTLGPLTTDIAPGYDHITSGIGAAMIGWFGCAMLCYVTPKEHLGLPNKDDVKTGIITYKIAAHAADLAKGHPGAQIRDNALSKARFEFRWEDQFNLGLDPDTARAFHDETLPKESAKVAHFCSMCGPKFCSMKITQEVREYAAEHGLTDEQKAIEAGFAEQSSRFKDGGSVIYKQV.

The interval Met-1–Gln-21 is disordered. Residues Asn-231, Met-260, Tyr-289, His-325, Ser-345–Gly-347, Asp-386–Arg-389, and Glu-425 each bind substrate. Zn(2+) is bound at residue His-429. Tyr-452 provides a ligand contact to substrate. Residue His-493 participates in Zn(2+) binding. 3 residues coordinate [4Fe-4S] cluster: Cys-573, Cys-576, and Cys-581.

It belongs to the ThiC family. Homodimer. The cofactor is [4Fe-4S] cluster.

It catalyses the reaction 5-amino-1-(5-phospho-beta-D-ribosyl)imidazole + S-adenosyl-L-methionine = 4-amino-2-methyl-5-(phosphooxymethyl)pyrimidine + CO + 5'-deoxyadenosine + formate + L-methionine + 3 H(+). The protein operates within cofactor biosynthesis; thiamine diphosphate biosynthesis. Functionally, catalyzes the synthesis of the hydroxymethylpyrimidine phosphate (HMP-P) moiety of thiamine from aminoimidazole ribotide (AIR) in a radical S-adenosyl-L-methionine (SAM)-dependent reaction. The protein is Phosphomethylpyrimidine synthase of Stutzerimonas stutzeri (strain A1501) (Pseudomonas stutzeri).